Here is a 279-residue protein sequence, read N- to C-terminus: Pantothenate synthetase (279 aa).

30-37 is a binding site for ATP; it reads MGALHAGH. Histidine 37 acts as the Proton donor in catalysis. Glutamine 61 provides a ligand contact to (R)-pantoate. Residue glutamine 61 participates in beta-alanine binding. Position 147–150 (147–150) interacts with ATP; it reads GEKD. Glutamine 153 lines the (R)-pantoate pocket. ATP contacts are provided by residues alanine 176 and 184-187; that span reads LSSR.

The protein belongs to the pantothenate synthetase family. Homodimer.

The protein resides in the cytoplasm. The enzyme catalyses (R)-pantoate + beta-alanine + ATP = (R)-pantothenate + AMP + diphosphate + H(+). It participates in cofactor biosynthesis; (R)-pantothenate biosynthesis; (R)-pantothenate from (R)-pantoate and beta-alanine: step 1/1. Functionally, catalyzes the condensation of pantoate with beta-alanine in an ATP-dependent reaction via a pantoyl-adenylate intermediate. The polypeptide is Pantothenate synthetase (Sphingopyxis alaskensis (strain DSM 13593 / LMG 18877 / RB2256) (Sphingomonas alaskensis)).